A 148-amino-acid chain; its full sequence is MAIYGIGTDIAQVSRVAAVLERTGGRFAEKVLGPDELRVFHARRARSEARGIAFLATRFSAKEAFSKAIGLGMHWPMTWRALQTLNHPSGEPYVVASGELADWLAARGITARVTVSDERDYAVSFVVAETDAETDAAPAPVPVSRTSS.

Residues aspartate 9 and glutamate 63 each coordinate Mg(2+).

The protein belongs to the P-Pant transferase superfamily. AcpS family. Mg(2+) serves as cofactor.

Its subcellular location is the cytoplasm. It carries out the reaction apo-[ACP] + CoA = holo-[ACP] + adenosine 3',5'-bisphosphate + H(+). Its function is as follows. Transfers the 4'-phosphopantetheine moiety from coenzyme A to a Ser of acyl-carrier-protein. The protein is Holo-[acyl-carrier-protein] synthase of Burkholderia cenocepacia (strain HI2424).